A 231-amino-acid chain; its full sequence is MDFEIYLFDIEGTTTPIEFVHKILFPYSVGKFETFFRSNSLERKWIEKLLEEGKRDSTYSRQLTDSPQNLSDYCKYLVSVDRKSGPLKEIQGRIWKHGYENGELKSSLFADVPSFLKRIQSAKKKSAVYSSGSIEAQKLIFKYSDFGDLTEYFSAYFDTGVGGKRESASYSRIAEQLGIAPEKILFFTDIKEEADAARNAEFKTTLLERPGNAPQPKHSHPKISSFENFNP.

Residues 206 to 231 (LLERPGNAPQPKHSHPKISSFENFNP) are disordered.

Belongs to the HAD-like hydrolase superfamily. MasA/MtnC family. In terms of assembly, monomer. Mg(2+) serves as cofactor.

It carries out the reaction 5-methylsulfanyl-2,3-dioxopentyl phosphate + H2O = 1,2-dihydroxy-5-(methylsulfanyl)pent-1-en-3-one + phosphate. Its pathway is amino-acid biosynthesis; L-methionine biosynthesis via salvage pathway; L-methionine from S-methyl-5-thio-alpha-D-ribose 1-phosphate: step 3/6. The protein operates within amino-acid biosynthesis; L-methionine biosynthesis via salvage pathway; L-methionine from S-methyl-5-thio-alpha-D-ribose 1-phosphate: step 4/6. In terms of biological role, bifunctional enzyme that catalyzes the enolization of 2,3-diketo-5-methylthiopentyl-1-phosphate (DK-MTP-1-P) into the intermediate 2-hydroxy-3-keto-5-methylthiopentenyl-1-phosphate (HK-MTPenyl-1-P), which is then dephosphorylated to form the acireductone 1,2-dihydroxy-3-keto-5-methylthiopentene (DHK-MTPene). The chain is Enolase-phosphatase E1 from Leptospira borgpetersenii serovar Hardjo-bovis (strain JB197).